A 367-amino-acid polypeptide reads, in one-letter code: 3-dehydroquinate synthase (367 aa).

NAD(+)-binding positions include 112-116 (GVIGD), 136-137 (TT), Lys-149, Lys-158, and 176-179 (TLKT). Zn(2+) is bound by residues Glu-191, His-256, and His-273.

This sequence belongs to the sugar phosphate cyclases superfamily. Dehydroquinate synthase family. The cofactor is NAD(+). Co(2+) is required as a cofactor. Requires Zn(2+) as cofactor.

It localises to the cytoplasm. The enzyme catalyses 7-phospho-2-dehydro-3-deoxy-D-arabino-heptonate = 3-dehydroquinate + phosphate. It participates in metabolic intermediate biosynthesis; chorismate biosynthesis; chorismate from D-erythrose 4-phosphate and phosphoenolpyruvate: step 2/7. Functionally, catalyzes the conversion of 3-deoxy-D-arabino-heptulosonate 7-phosphate (DAHP) to dehydroquinate (DHQ). The chain is 3-dehydroquinate synthase from Prochlorococcus marinus (strain SARG / CCMP1375 / SS120).